We begin with the raw amino-acid sequence, 199 residues long: dTTP/UTP pyrophosphatase (199 aa).

The active-site Proton acceptor is Asp79.

This sequence belongs to the Maf family. YhdE subfamily. A divalent metal cation is required as a cofactor.

Its subcellular location is the cytoplasm. The enzyme catalyses dTTP + H2O = dTMP + diphosphate + H(+). The catalysed reaction is UTP + H2O = UMP + diphosphate + H(+). Nucleoside triphosphate pyrophosphatase that hydrolyzes dTTP and UTP. May have a dual role in cell division arrest and in preventing the incorporation of modified nucleotides into cellular nucleic acids. The chain is dTTP/UTP pyrophosphatase from Porphyromonas gingivalis (strain ATCC 33277 / DSM 20709 / CIP 103683 / JCM 12257 / NCTC 11834 / 2561).